A 55-amino-acid polypeptide reads, in one-letter code: uncharacterized protein (55 aa).

This is an uncharacterized protein from Thermoproteus tenax (TTV1).